We begin with the raw amino-acid sequence, 326 residues long: tRNA N6-adenosine threonylcarbamoyltransferase (326 aa).

Fe cation contacts are provided by histidine 111 and histidine 115. Substrate contacts are provided by residues 134 to 138 (TVSGG), aspartate 167, glycine 180, aspartate 184, and asparagine 268. Aspartate 293 lines the Fe cation pocket.

It belongs to the KAE1 / TsaD family. The cofactor is Fe(2+).

It is found in the cytoplasm. The catalysed reaction is L-threonylcarbamoyladenylate + adenosine(37) in tRNA = N(6)-L-threonylcarbamoyladenosine(37) in tRNA + AMP + H(+). In terms of biological role, required for the formation of a threonylcarbamoyl group on adenosine at position 37 (t(6)A37) in tRNAs that read codons beginning with adenine. Is involved in the transfer of the threonylcarbamoyl moiety of threonylcarbamoyl-AMP (TC-AMP) to the N6 group of A37, together with TsaE and TsaB. TsaD likely plays a direct catalytic role in this reaction. This Dehalococcoides mccartyi (strain ATCC BAA-2100 / JCM 16839 / KCTC 5957 / BAV1) protein is tRNA N6-adenosine threonylcarbamoyltransferase.